We begin with the raw amino-acid sequence, 329 residues long: Cytochrome f (329 aa).

Positions 1 to 44 (MKRNIIFLVIHQFENLTMKKKQNIFFIFLLTVFFNFTVNSNVSA) are cleaved as a signal peptide. Heme-binding residues include Y45, C65, C68, and H69. The chain crosses the membrane as a helical span at residues 295 to 315 (VQGLIIFLITIFITQLFLVLK).

It belongs to the cytochrome f family. In terms of assembly, the 4 large subunits of the cytochrome b6-f complex are cytochrome b6, subunit IV (17 kDa polypeptide, petD), cytochrome f and the Rieske protein, while the 4 small subunits are PetG, PetL, PetM and PetN. The complex functions as a dimer. Heme serves as cofactor.

The protein localises to the plastid. Its subcellular location is the chloroplast thylakoid membrane. Its function is as follows. Component of the cytochrome b6-f complex, which mediates electron transfer between photosystem II (PSII) and photosystem I (PSI), cyclic electron flow around PSI, and state transitions. The polypeptide is Cytochrome f (Tupiella akineta (Green alga)).